We begin with the raw amino-acid sequence, 519 residues long: Galactose-1-phosphate uridylyltransferase (519 aa).

It belongs to the galactose-1-phosphate uridylyltransferase type 2 family.

It localises to the cytoplasm. It carries out the reaction alpha-D-galactose 1-phosphate + UDP-alpha-D-glucose = alpha-D-glucose 1-phosphate + UDP-alpha-D-galactose. The protein operates within carbohydrate metabolism; galactose metabolism. This is Galactose-1-phosphate uridylyltransferase from Caldanaerobacter subterraneus subsp. tengcongensis (strain DSM 15242 / JCM 11007 / NBRC 100824 / MB4) (Thermoanaerobacter tengcongensis).